The sequence spans 51 residues: 2,3,4,5-tetrahydropyridine-2,6-dicarboxylate N-succinyltransferase (51 aa).

Belongs to the transferase hexapeptide repeat family. In terms of assembly, homotrimer.

It is found in the cytoplasm. The enzyme catalyses (S)-2,3,4,5-tetrahydrodipicolinate + succinyl-CoA + H2O = (S)-2-succinylamino-6-oxoheptanedioate + CoA. The protein operates within amino-acid biosynthesis; L-lysine biosynthesis via DAP pathway; LL-2,6-diaminopimelate from (S)-tetrahydrodipicolinate (succinylase route): step 1/3. This chain is 2,3,4,5-tetrahydropyridine-2,6-dicarboxylate N-succinyltransferase (dapD), found in Klebsiella oxytoca.